The primary structure comprises 167 residues: Ammonium/H(+) antiporter subunit AmhM (167 aa).

One can recognise an RCK C-terminal domain in the interval 79 to 163 (IDRIKLIRKQ…IQKFEELCAC (85 aa)).

Interacts with AmhT.

The protein localises to the cell membrane. In terms of biological role, modulates the activity of the ammonium/proton antiporter AmhT. This is Ammonium/H(+) antiporter subunit AmhM (amhM) from Alkalihalophilus pseudofirmus (strain ATCC BAA-2126 / JCM 17055 / OF4) (Bacillus pseudofirmus).